We begin with the raw amino-acid sequence, 116 residues long: Flagellar transcriptional regulator FlhD (116 aa).

This sequence belongs to the FlhD family. As to quaternary structure, homodimer; disulfide-linked. Forms a heterohexamer composed of two FlhC and four FlhD subunits. Each FlhC binds a FlhD dimer, forming a heterotrimer, and a hexamer assembles by dimerization of two heterotrimers.

It is found in the cytoplasm. Functions in complex with FlhC as a master transcriptional regulator that regulates transcription of several flagellar and non-flagellar operons by binding to their promoter region. Activates expression of class 2 flagellar genes, including fliA, which is a flagellum-specific sigma factor that turns on the class 3 genes. Also regulates genes whose products function in a variety of physiological pathways. This Xenorhabdus nematophila (Achromobacter nematophilus) protein is Flagellar transcriptional regulator FlhD.